The chain runs to 345 residues: Protein RecA (345 aa).

An ATP-binding site is contributed by 63-70 (GPESSGKT). The tract at residues 326–345 (VLSDALMTDPEPDADGTPED) is disordered. Over residues 335–345 (PEPDADGTPED) the composition is skewed to acidic residues.

It belongs to the RecA family.

The protein resides in the cytoplasm. Functionally, can catalyze the hydrolysis of ATP in the presence of single-stranded DNA, the ATP-dependent uptake of single-stranded DNA by duplex DNA, and the ATP-dependent hybridization of homologous single-stranded DNAs. It interacts with LexA causing its activation and leading to its autocatalytic cleavage. This is Protein RecA from Gluconobacter oxydans (strain 621H) (Gluconobacter suboxydans).